Reading from the N-terminus, the 295-residue chain is Non-selective voltage-gated ion channel VDAC2 (295 aa).

2 residues coordinate ATP: lysine 24 and lysine 32. Lysine 32 is modified (N6-acetyllysine; alternate). Lysine 32 is subject to N6-succinyllysine; alternate. Lysine 32 participates in a covalent cross-link: Glycyl lysine isopeptide (Lys-Gly) (interchain with G-Cter in ubiquitin); alternate. Transmembrane regions (beta stranded) follow at residues 38-45 and 51-60; these read LVKLDVKT and VEFSTSGSSN. Residue lysine 65 forms a Glycyl lysine isopeptide (Lys-Gly) (interchain with G-Cter in ubiquitin) linkage. The chain crosses the membrane as a beta stranded span at residues 66-76; it reads VSGTLETKYKW. Residue tyrosine 79 is modified to Phosphotyrosine. 3 consecutive transmembrane segments (beta stranded) span residues 81–88, 92–100, and 107–116; these read LTFTEKWN, TLGTEIAIE, and LKLTFDTTFS. Residue threonine 119 is modified to Phosphothreonine. At lysine 121 the chain carries N6-acetyllysine; alternate. Residue lysine 121 forms a Glycyl lysine isopeptide (Lys-Gly) (interchain with G-Cter in ubiquitin); alternate linkage. Lysine 122 is covalently cross-linked (Glycyl lysine isopeptide (Lys-Gly) (interchain with G-Cter in ubiquitin)). A run of 4 beta stranded transmembrane segments spans residues 122–131, 135–144, 148–157, and 161–170; these read KSGKIKSAYK, INLGCDVDFD, PAIHGSAVFG, and WLAGYQMTFD. A Glycyl lysine isopeptide (Lys-Gly) (interchain with G-Cter in ubiquitin) cross-link involves residue lysine 173. Beta stranded transmembrane passes span 177-187, 190-197, 201-210, 214-222, 229-238, and 243-250; these read TRSNFAVGYRT, FQLHTNVN, EFGGSIYQKV, FDTSVNLAW, TRFGIAAKYQ, and ASISAKVN. Serine 252 bears the Phosphoserine mark. NAD(+) is bound by residues 254 to 256 and 272 to 276; these read LIG and SALVD. The next 2 membrane-spanning stretches (beta stranded) occupy residues 254 to 263 and 267 to 275; these read LIGVGYTQTL and VKLTLSALV. An N6-acetyllysine; alternate modification is found at lysine 278. Lysine 278 participates in a covalent cross-link: Glycyl lysine isopeptide (Lys-Gly) (interchain with G-Cter in ubiquitin); alternate. The chain crosses the membrane as a beta stranded span at residues 285-295; sequence HKLGLALELEA.

It belongs to the eukaryotic mitochondrial porin family. Monomer, homodimer and higher order oligomers; formation of higher order structures is necessary for scramblase activity. Interacts with ARMC12 in a TBC1D21-dependent manner. Interacts with KLC3. Interacts with SPATA33. Interacts with PPP3CC in a SPATA33-dependent manner. Post-translationally, ubiquitinated by PRKN during mitophagy, leading to its degradation and enhancement of mitophagy. Deubiquitinated by USP30. As to expression, highest levels of expression detected in testis, less but still abundant expression in heart, kidney, brain, and skeletal muscle. Expressed in the sperm midpiece (at protein level).

Its subcellular location is the mitochondrion outer membrane. The protein resides in the membrane. It catalyses the reaction chloride(in) = chloride(out). It carries out the reaction K(+)(in) = K(+)(out). The catalysed reaction is a 1,2-diacyl-sn-glycero-3-phospho-L-serine(in) = a 1,2-diacyl-sn-glycero-3-phospho-L-serine(out). The enzyme catalyses a 1,2-diacyl-sn-glycero-3-phosphocholine(in) = a 1,2-diacyl-sn-glycero-3-phosphocholine(out). It catalyses the reaction a 1,2-diacyl-sn-glycero-3-phospho-(1D-myo-inositol)(in) = a 1,2-diacyl-sn-glycero-3-phospho-(1D-myo-inositol)(out). In terms of biological role, non-selective voltage-gated ion channel that mediates the transport of anions and cations through the mitochondrion outer membrane and plasma membrane. The channel adopts an open conformation at zero mV and a closed conformation at both positive and negative potentials. There are two populations of channels; the main that functions in a lower open-state conductance with lower ion selectivity, that switch, in a voltage-dependent manner, from the open to a low-conducting 'closed' state and the other that has a normal ion selectivity in the typical high conductance, 'open' state. Binds various lipids, including the sphingolipid ceramide, the phospholipid phosphatidylcholine, and the sterols cholesterol and oxysterol. Binding of ceramide promotes the mitochondrial outer membrane permeabilization (MOMP) apoptotic pathway. Catalyzes the scrambling of phospholipids across the outer mitochondrial membrane; the mechanism is unrelated to channel activity and is capable of translocating both anionic and zwitterionic phospholipids. The sequence is that of Non-selective voltage-gated ion channel VDAC2 from Mus musculus (Mouse).